The primary structure comprises 734 residues: Photosystem I P700 chlorophyll a apoprotein A2 (734 aa).

Helical transmembrane passes span 46–69, 135–158, 175–199, 273–291, 330–353, 369–395, 417–439, and 517–535; these read IFAS…FHVA, LYTG…LHLQ, LNHH…HVAI, IAHH…GHMY, IHFQ…QHMY, AALY…IFFI, AIIS…LYVH, and FLVH…LILV. [4Fe-4S] cluster-binding residues include cysteine 559 and cysteine 568. The next 2 membrane-spanning stretches (helical) occupy residues 575–596 and 643–665; these read AFYL…YWHW and LSVW…MFLI. Chlorophyll a-binding residues include histidine 654, methionine 662, and tyrosine 670. Tryptophan 671 contacts phylloquinone. The helical transmembrane segment at 707 to 727 threads the bilayer; the sequence is LVGLAHFSVGYIFTYAAFLIA.

It belongs to the PsaA/PsaB family. As to quaternary structure, the PsaA/B heterodimer binds the P700 chlorophyll special pair and subsequent electron acceptors. PSI consists of a core antenna complex that captures photons, and an electron transfer chain that converts photonic excitation into a charge separation. The eukaryotic PSI reaction center is composed of at least 11 subunits. P700 is a chlorophyll a/chlorophyll a' dimer, A0 is one or more chlorophyll a, A1 is one or both phylloquinones and FX is a shared 4Fe-4S iron-sulfur center. serves as cofactor.

The protein resides in the plastid. It localises to the chloroplast thylakoid membrane. The catalysed reaction is reduced [plastocyanin] + hnu + oxidized [2Fe-2S]-[ferredoxin] = oxidized [plastocyanin] + reduced [2Fe-2S]-[ferredoxin]. Functionally, psaA and PsaB bind P700, the primary electron donor of photosystem I (PSI), as well as the electron acceptors A0, A1 and FX. PSI is a plastocyanin-ferredoxin oxidoreductase, converting photonic excitation into a charge separation, which transfers an electron from the donor P700 chlorophyll pair to the spectroscopically characterized acceptors A0, A1, FX, FA and FB in turn. Oxidized P700 is reduced on the lumenal side of the thylakoid membrane by plastocyanin. The protein is Photosystem I P700 chlorophyll a apoprotein A2 of Saccharum hybrid (Sugarcane).